Consider the following 98-residue polypeptide: Aspartyl/glutamyl-tRNA(Asn/Gln) amidotransferase subunit C (98 aa).

Belongs to the GatC family. In terms of assembly, heterotrimer of A, B and C subunits.

It carries out the reaction L-glutamyl-tRNA(Gln) + L-glutamine + ATP + H2O = L-glutaminyl-tRNA(Gln) + L-glutamate + ADP + phosphate + H(+). It catalyses the reaction L-aspartyl-tRNA(Asn) + L-glutamine + ATP + H2O = L-asparaginyl-tRNA(Asn) + L-glutamate + ADP + phosphate + 2 H(+). In terms of biological role, allows the formation of correctly charged Asn-tRNA(Asn) or Gln-tRNA(Gln) through the transamidation of misacylated Asp-tRNA(Asn) or Glu-tRNA(Gln) in organisms which lack either or both of asparaginyl-tRNA or glutaminyl-tRNA synthetases. The reaction takes place in the presence of glutamine and ATP through an activated phospho-Asp-tRNA(Asn) or phospho-Glu-tRNA(Gln). This Kocuria rhizophila (strain ATCC 9341 / DSM 348 / NBRC 103217 / DC2201) protein is Aspartyl/glutamyl-tRNA(Asn/Gln) amidotransferase subunit C.